A 210-amino-acid chain; its full sequence is Outer-membrane lipoprotein LolB (210 aa).

An N-terminal signal peptide occupies residues 1–29; sequence MSLISNNEERSLRVRYCIAIALSALLISG. A lipid anchor (N-palmitoyl cysteine) is attached at C30. C30 carries the S-diacylglycerol cysteine lipid modification.

It belongs to the LolB family. In terms of assembly, monomer.

Its subcellular location is the cell outer membrane. Plays a critical role in the incorporation of lipoproteins in the outer membrane after they are released by the LolA protein. The sequence is that of Outer-membrane lipoprotein LolB from Coxiella burnetii (strain RSA 493 / Nine Mile phase I).